We begin with the raw amino-acid sequence, 337 residues long: Glyceraldehyde-3-phosphate dehydrogenase (337 aa).

NAD(+) is bound by residues 17-18 (RI), aspartate 39, lysine 83, and serine 125. D-glyceraldehyde 3-phosphate-binding positions include 156-158 (SCT), threonine 187, arginine 202, 215-216 (TG), and arginine 238. Residue cysteine 157 is the Nucleophile of the active site. Asparagine 319 provides a ligand contact to NAD(+).

It belongs to the glyceraldehyde-3-phosphate dehydrogenase family. In terms of assembly, homotetramer.

It is found in the cytoplasm. It catalyses the reaction D-glyceraldehyde 3-phosphate + phosphate + NAD(+) = (2R)-3-phospho-glyceroyl phosphate + NADH + H(+). It functions in the pathway carbohydrate degradation; glycolysis; pyruvate from D-glyceraldehyde 3-phosphate: step 1/5. In terms of biological role, catalyzes the oxidative phosphorylation of glyceraldehyde 3-phosphate (G3P) to 1,3-bisphosphoglycerate (BPG) using the cofactor NAD. The first reaction step involves the formation of a hemiacetal intermediate between G3P and a cysteine residue, and this hemiacetal intermediate is then oxidized to a thioester, with concomitant reduction of NAD to NADH. The reduced NADH is then exchanged with the second NAD, and the thioester is attacked by a nucleophilic inorganic phosphate to produce BPG. This Mycoplasma genitalium (strain ATCC 33530 / DSM 19775 / NCTC 10195 / G37) (Mycoplasmoides genitalium) protein is Glyceraldehyde-3-phosphate dehydrogenase (gapA).